The primary structure comprises 665 residues: Glycine--tRNA ligase beta subunit (665 aa).

The protein belongs to the class-II aminoacyl-tRNA synthetase family. Tetramer of two alpha and two beta subunits.

The protein localises to the cytoplasm. The enzyme catalyses tRNA(Gly) + glycine + ATP = glycyl-tRNA(Gly) + AMP + diphosphate. The chain is Glycine--tRNA ligase beta subunit (glyS) from Rickettsia prowazekii (strain Madrid E).